Reading from the N-terminus, the 234-residue chain is Opacity protein opA55 (234 aa).

Residue Ala-1 is a signal peptide.

The protein belongs to the opacity porin family.

Its subcellular location is the cell outer membrane. Functionally, implicated in a number of adherence functions. OPA proteins are implicated in pathogenesis and are subject to phase variation. This Neisseria gonorrhoeae protein is Opacity protein opA55 (opaE).